Consider the following 493-residue polypeptide: UDP-N-acetylmuramoyl-L-alanyl-D-glutamate--2,6-diaminopimelate ligase (493 aa).

Position 31 (serine 31) interacts with UDP-N-acetyl-alpha-D-muramoyl-L-alanyl-D-glutamate. 111-117 serves as a coordination point for ATP; it reads GTNGKTT. UDP-N-acetyl-alpha-D-muramoyl-L-alanyl-D-glutamate is bound by residues asparagine 152, 153 to 154, serine 180, and arginine 188; that span reads TT. Lysine 220 is subject to N6-carboxylysine. Meso-2,6-diaminopimelate-binding positions include arginine 386, 410-413, glycine 462, and glutamate 466; that span reads DNPR. The Meso-diaminopimelate recognition motif signature appears at 410–413; the sequence is DNPR.

Belongs to the MurCDEF family. MurE subfamily. The cofactor is Mg(2+). Post-translationally, carboxylation is probably crucial for Mg(2+) binding and, consequently, for the gamma-phosphate positioning of ATP.

The protein localises to the cytoplasm. It catalyses the reaction UDP-N-acetyl-alpha-D-muramoyl-L-alanyl-D-glutamate + meso-2,6-diaminopimelate + ATP = UDP-N-acetyl-alpha-D-muramoyl-L-alanyl-gamma-D-glutamyl-meso-2,6-diaminopimelate + ADP + phosphate + H(+). Its pathway is cell wall biogenesis; peptidoglycan biosynthesis. Catalyzes the addition of meso-diaminopimelic acid to the nucleotide precursor UDP-N-acetylmuramoyl-L-alanyl-D-glutamate (UMAG) in the biosynthesis of bacterial cell-wall peptidoglycan. The protein is UDP-N-acetylmuramoyl-L-alanyl-D-glutamate--2,6-diaminopimelate ligase (murE1) of Oceanobacillus iheyensis (strain DSM 14371 / CIP 107618 / JCM 11309 / KCTC 3954 / HTE831).